Reading from the N-terminus, the 305-residue chain is Probable G-protein coupled receptor 141 (305 aa).

At 1–22 (MPGHNTSRNSSCDPIVTPHLIS) the chain is on the extracellular side. N-linked (GlcNAc...) asparagine glycosylation is found at N5 and N9. Residues 23–43 (LYFIVLIGGLVGVISILFLLV) form a helical membrane-spanning segment. Residues 44-50 (KMNTRSV) are Cytoplasmic-facing. Residues 51-71 (TTMAVINLVVVHSVFLLTVPF) traverse the membrane as a helical segment. Over 72 to 89 (RLTYLIKKTWMFGLPFCK) the chain is Extracellular. The chain crosses the membrane as a helical span at residues 90–110 (FVSAMLHIHMYLTFLFYVVIL). Residues 111–131 (VTRYLIFFKCKDKVEFYRKLH) are Cytoplasmic-facing. The chain crosses the membrane as a helical span at residues 132 to 152 (AVAASAGMWTLVIVIVVPLVV). At 153–183 (SRYGIHEEYNEEHCFKFHKELAYTYVKIINY) the chain is on the extracellular side. The helical transmembrane segment at 184–204 (MIVIFVIAVAVILLVFQVFII) threads the bilayer. Topologically, residues 205–227 (MLMVQKLRHSLLSHQEFWAQLKN) are cytoplasmic. A helical transmembrane segment spans residues 228 to 248 (LFFIGVILVCFLPYQFFRIYY). Over 249-267 (LNVVTHSNACNSKVAFYNE) the chain is Extracellular. The chain crosses the membrane as a helical span at residues 268-288 (IFLSVTAISCYDLLLFVFGGS). At 289–305 (HWFKQKIIGLWNCVLCR) the chain is on the cytoplasmic side.

The protein belongs to the G-protein coupled receptor 1 family.

The protein resides in the cell membrane. Orphan receptor. This chain is Probable G-protein coupled receptor 141 (GPR141), found in Homo sapiens (Human).